The chain runs to 135 residues: Large ribosomal subunit protein uL16m (135 aa).

The protein belongs to the universal ribosomal protein uL16 family.

The protein localises to the mitochondrion. The protein is Large ribosomal subunit protein uL16m (RPL16) of Prototheca wickerhamii.